Consider the following 118-residue polypeptide: UPF0295 protein BT9727_0449 (118 aa).

2 helical membrane-spanning segments follow: residues 12 to 32 and 43 to 63; these read IRTF…LGVF and FMMV…WIGM.

Belongs to the UPF0295 family.

It localises to the cell membrane. The protein is UPF0295 protein BT9727_0449 of Bacillus thuringiensis subsp. konkukian (strain 97-27).